The chain runs to 351 residues: Methionine import ATP-binding protein MetN (351 aa).

One can recognise an ABC transporter domain in the interval 2-238 (IKLNHINKTY…PKHPITRELI (237 aa)). 35–42 (GYSGAGKS) provides a ligand contact to ATP.

Belongs to the ABC transporter superfamily. Methionine importer (TC 3.A.1.24) family. The complex is composed of two ATP-binding proteins (MetN), two transmembrane proteins (MetI) and a solute-binding protein (MetQ).

The protein localises to the cell inner membrane. It carries out the reaction L-methionine(out) + ATP + H2O = L-methionine(in) + ADP + phosphate + H(+). The enzyme catalyses D-methionine(out) + ATP + H2O = D-methionine(in) + ADP + phosphate + H(+). Part of the ABC transporter complex MetNIQ involved in methionine import. Responsible for energy coupling to the transport system. This Helicobacter hepaticus (strain ATCC 51449 / 3B1) protein is Methionine import ATP-binding protein MetN.